A 314-amino-acid chain; its full sequence is Ribosomal RNA small subunit methyltransferase H (314 aa).

S-adenosyl-L-methionine-binding positions include 33-35 (GGH), D52, F84, D105, and Q112.

It belongs to the methyltransferase superfamily. RsmH family.

The protein localises to the cytoplasm. The enzyme catalyses cytidine(1402) in 16S rRNA + S-adenosyl-L-methionine = N(4)-methylcytidine(1402) in 16S rRNA + S-adenosyl-L-homocysteine + H(+). Specifically methylates the N4 position of cytidine in position 1402 (C1402) of 16S rRNA. This chain is Ribosomal RNA small subunit methyltransferase H, found in Lactobacillus delbrueckii subsp. bulgaricus (strain ATCC 11842 / DSM 20081 / BCRC 10696 / JCM 1002 / NBRC 13953 / NCIMB 11778 / NCTC 12712 / WDCM 00102 / Lb 14).